A 311-amino-acid chain; its full sequence is Ribosomal protein L11 methyltransferase (311 aa).

S-adenosyl-L-methionine contacts are provided by threonine 163, glycine 184, aspartate 206, and asparagine 248.

Belongs to the methyltransferase superfamily. PrmA family.

It is found in the cytoplasm. The enzyme catalyses L-lysyl-[protein] + 3 S-adenosyl-L-methionine = N(6),N(6),N(6)-trimethyl-L-lysyl-[protein] + 3 S-adenosyl-L-homocysteine + 3 H(+). Methylates ribosomal protein L11. The protein is Ribosomal protein L11 methyltransferase of Clostridium acetobutylicum (strain ATCC 824 / DSM 792 / JCM 1419 / IAM 19013 / LMG 5710 / NBRC 13948 / NRRL B-527 / VKM B-1787 / 2291 / W).